Here is a 271-residue protein sequence, read N- to C-terminus: Purine nucleoside phosphorylase 1 (271 aa).

Residues serine 28, histidine 59, 79 to 81, and alanine 111 each bind phosphate; that span reads RFH. Position 28 is a phosphoserine (serine 28). Residue glutamate 191 coordinates a purine D-ribonucleoside. Serine 210 contributes to the phosphate binding site. Residue asparagine 233 coordinates a purine D-ribonucleoside.

Belongs to the PNP/MTAP phosphorylase family. As to quaternary structure, homotrimer.

The catalysed reaction is a purine 2'-deoxy-D-ribonucleoside + phosphate = a purine nucleobase + 2-deoxy-alpha-D-ribose 1-phosphate. Its pathway is purine metabolism; purine nucleoside salvage. In terms of biological role, the purine nucleoside phosphorylases catalyze the phosphorolytic breakdown of the N-glycosidic bond in the beta-(deoxy)ribonucleoside molecules, with the formation of the corresponding free purine bases and pentose-1-phosphate. Cleaves guanosine, inosine, 2'-deoxyguanosine and 2'-deoxyinosine. The polypeptide is Purine nucleoside phosphorylase 1 (punA) (Bacillus subtilis (strain 168)).